Here is a 672-residue protein sequence, read N- to C-terminus: tRNA 5-methylaminomethyl-2-thiouridine biosynthesis bifunctional protein MnmC (672 aa).

The tRNA (mnm(5)s(2)U34)-methyltransferase stretch occupies residues 1–243; the sequence is MTSITHAELG…KREMIAGCME (243 aa). The tract at residues 269-672 is FAD-dependent cmnm(5)s(2)U34 oxidoreductase; it reads IGGGIASAAL…LRKGKAITEL (404 aa).

In the N-terminal section; belongs to the methyltransferase superfamily. tRNA (mnm(5)s(2)U34)-methyltransferase family. This sequence in the C-terminal section; belongs to the DAO family. It depends on FAD as a cofactor.

The protein resides in the cytoplasm. It carries out the reaction 5-aminomethyl-2-thiouridine(34) in tRNA + S-adenosyl-L-methionine = 5-methylaminomethyl-2-thiouridine(34) in tRNA + S-adenosyl-L-homocysteine + H(+). Its function is as follows. Catalyzes the last two steps in the biosynthesis of 5-methylaminomethyl-2-thiouridine (mnm(5)s(2)U) at the wobble position (U34) in tRNA. Catalyzes the FAD-dependent demodification of cmnm(5)s(2)U34 to nm(5)s(2)U34, followed by the transfer of a methyl group from S-adenosyl-L-methionine to nm(5)s(2)U34, to form mnm(5)s(2)U34. The sequence is that of tRNA 5-methylaminomethyl-2-thiouridine biosynthesis bifunctional protein MnmC from Vibrio vulnificus (strain YJ016).